The following is a 661-amino-acid chain: Probable potassium transport system protein Kup 1 (661 aa).

The segment covering 1 to 11 (MKGLFPAGGGN) has biased composition (gly residues). The tract at residues 1-38 (MKGLFPAGGGNPPSSYLSRFLPHRKERSPENVTSGRNG) is disordered. 12 helical membrane passes run 48–68 (LALG…LYTI), 85–105 (IMGV…IKYI), 139–159 (AVVV…GFIT), 177–197 (AAKN…FLVQ), 207–227 (IFGP…LLCI), 251–271 (VHGL…EALY), 286–306 (WFAM…AALL), 324–344 (LLLP…QAMI), 384–404 (LMMV…GLAG), 405–425 (AYGV…FFVA), 436–456 (TAPL…SNLL), and 458–478 (FFDG…VMAS).

Belongs to the HAK/KUP transporter (TC 2.A.72) family.

Its subcellular location is the cell inner membrane. The catalysed reaction is K(+)(in) + H(+)(in) = K(+)(out) + H(+)(out). Transport of potassium into the cell. Likely operates as a K(+):H(+) symporter. This is Probable potassium transport system protein Kup 1 from Syntrophobacter fumaroxidans (strain DSM 10017 / MPOB).